Reading from the N-terminus, the 146-residue chain is Large ribosomal subunit protein uL15 (146 aa).

Residues 1 to 54 are disordered; sequence MKLHELKPAAGSRKAPKRVGRGTGSGLGRNAGKGEKGQNARSGGGVRPGFEGGQ. 2 stretches are compositionally biased toward gly residues: residues 21–31 and 42–52; these read RGTGSGLGRNA and SGGGVRPGFEG.

This sequence belongs to the universal ribosomal protein uL15 family. Part of the 50S ribosomal subunit.

In terms of biological role, binds to the 23S rRNA. The sequence is that of Large ribosomal subunit protein uL15 from Clostridium acetobutylicum (strain ATCC 824 / DSM 792 / JCM 1419 / IAM 19013 / LMG 5710 / NBRC 13948 / NRRL B-527 / VKM B-1787 / 2291 / W).